The primary structure comprises 320 residues: GTP 3',8-cyclase (320 aa).

Positions 5–225 (QFDRKINYLR…IQLIKKDEKA (221 aa)) constitute a Radical SAM core domain. GTP is bound at residue Arg14. The [4Fe-4S] cluster site is built by Cys21 and Cys25. Tyr27 provides a ligand contact to S-adenosyl-L-methionine. Position 28 (Cys28) interacts with [4Fe-4S] cluster. GTP is bound at residue Arg64. An S-adenosyl-L-methionine-binding site is contributed by Gly68. GTP is bound at residue Thr95. Ser119 serves as a coordination point for S-adenosyl-L-methionine. Lys155 provides a ligand contact to GTP. S-adenosyl-L-methionine is bound at residue Met189. Residues Cys248 and Cys251 each coordinate [4Fe-4S] cluster. GTP is bound at residue 253-255 (RIR). Cys265 serves as a coordination point for [4Fe-4S] cluster.

This sequence belongs to the radical SAM superfamily. MoaA family. In terms of assembly, monomer and homodimer. [4Fe-4S] cluster is required as a cofactor.

The catalysed reaction is GTP + AH2 + S-adenosyl-L-methionine = (8S)-3',8-cyclo-7,8-dihydroguanosine 5'-triphosphate + 5'-deoxyadenosine + L-methionine + A + H(+). It participates in cofactor biosynthesis; molybdopterin biosynthesis. Functionally, catalyzes the cyclization of GTP to (8S)-3',8-cyclo-7,8-dihydroguanosine 5'-triphosphate. This is GTP 3',8-cyclase from Campylobacter jejuni subsp. doylei (strain ATCC BAA-1458 / RM4099 / 269.97).